A 426-amino-acid polypeptide reads, in one-letter code: UPF0597 protein CLB_1750 (426 aa).

It belongs to the UPF0597 family.

The chain is UPF0597 protein CLB_1750 from Clostridium botulinum (strain ATCC 19397 / Type A).